The sequence spans 474 residues: Gamma-aminobutyric acid receptor subunit beta-2 (474 aa).

A signal peptide spans 1–25 (MWRVRKRGYFGIWSFPLIIAAVCAQ). Over 26–244 (SVNDPSNMSL…SFKLKRNIGY (219 aa)) the chain is Extracellular. N-linked (GlcNAc...) asparagine glycans are attached at residues N32 and N104. Y121 lines the histamine pocket. C160 and C174 are disulfide-bonded. N-linked (GlcNAc...) asparagine glycosylation occurs at N173. Residues 180–181 (SY) and T226 each bind histamine. 4-aminobutanoate contacts are provided by Y181 and T226. Helical transmembrane passes span 245–266 (FILQTYMPSILITILSWVSFWI), 270–292 (ASAARVALGITTVLTMTTINTHL), and 304–326 (AIDMYLMGCFVFVFMALLEYALV). At 327–451 (NYIFFGRGPQ…DLTDVNAIDR (125 aa)) the chain is on the cytoplasmic side. A Phosphotyrosine modification is found at Y403. Residues 452–473 (WSRIFFPVVFSFFNIVYWLYYV) form a helical membrane-spanning segment.

The protein belongs to the ligand-gated ion channel (TC 1.A.9) family. Gamma-aminobutyric acid receptor (TC 1.A.9.5) subfamily. GABRB2 sub-subfamily. As to quaternary structure, heteropentamer, formed by a combination of alpha (GABRA1-6), beta (GABRB1-3), gamma (GABRG1-3), delta (GABRD), epsilon (GABRE), rho (GABRR1-3), pi (GABRP) and theta (GABRQ) chains, each subunit exhibiting distinct physiological and pharmacological properties. Interacts with UBQLN1. May interact with KIF21B. Identified in a complex of 720 kDa composed of LHFPL4, NLGN2, GABRA1, GABRB2, GABRG2 and GABRB3. Post-translationally, glycosylated. As to expression, expressed in brain (at protein level), in cerebellar granule cells. Expressed in lungs, in alveolar epithelium.

The protein resides in the postsynaptic cell membrane. The protein localises to the cell membrane. It is found in the cytoplasmic vesicle membrane. The catalysed reaction is chloride(in) = chloride(out). Allosterically activated by benzodiazepines and the anesthetic etomidate. Inhibited by the antagonist bicuculline. Potentiated by histamine. Its function is as follows. Beta subunit of the heteropentameric ligand-gated chloride channel gated by gamma-aminobutyric acid (GABA), a major inhibitory neurotransmitter in the brain. GABA-gated chloride channels, also named GABA(A) receptors (GABAAR), consist of five subunits arranged around a central pore and contain GABA active binding site(s) located at the alpha and beta subunit interface(s). When activated by GABA, GABAARs selectively allow the flow of chloride anions across the cell membrane down their electrochemical gradient. Chloride influx into the postsynaptic neuron following GABAAR opening decreases the neuron ability to generate a new action potential, thereby reducing nerve transmission. GABAARs containing alpha-1 and beta-2 or -3 subunits exhibit synaptogenic activity; the gamma-2 subunit being necessary but not sufficient to induce rapid synaptic contacts formation. Extrasynaptic beta-2 receptors contribute to the tonic GABAergic inhibition. Beta-containing GABAARs can simultaneously bind GABA and histamine where histamine binds at the interface of two neighboring beta subunits, which may be involved in the regulation of sleep and wakefulness. This is Gamma-aminobutyric acid receptor subunit beta-2 from Rattus norvegicus (Rat).